The sequence spans 41 residues: Cytochrome b559 subunit beta (41 aa).

A helical membrane pass occupies residues 16-32 (WLAVHALAIPTVFFLGS). His20 provides a ligand contact to heme.

This sequence belongs to the PsbE/PsbF family. In terms of assembly, heterodimer of an alpha subunit and a beta subunit. PSII is composed of 1 copy each of membrane proteins PsbA, PsbB, PsbC, PsbD, PsbE, PsbF, PsbH, PsbI, PsbJ, PsbK, PsbL, PsbM, PsbT, PsbY, PsbZ, Psb30/Ycf12, at least 3 peripheral proteins of the oxygen-evolving complex and a large number of cofactors. It forms dimeric complexes. Heme b serves as cofactor.

The protein localises to the plastid. Its subcellular location is the chloroplast thylakoid membrane. Its function is as follows. This b-type cytochrome is tightly associated with the reaction center of photosystem II (PSII). PSII is a light-driven water:plastoquinone oxidoreductase that uses light energy to abstract electrons from H(2)O, generating O(2) and a proton gradient subsequently used for ATP formation. It consists of a core antenna complex that captures photons, and an electron transfer chain that converts photonic excitation into a charge separation. The chain is Cytochrome b559 subunit beta from Euglena gracilis.